The following is a 361-amino-acid chain: Probable purine permease 5 (361 aa).

9 helical membrane-spanning segments follow: residues 37-57 (WILL…SSLL), 70-90 (WIIS…LLPT), 105-125 (LVLS…MYAY), 134-154 (TSSL…YLIV), 158-178 (LNAS…IIAL), 193-213 (YFAG…IFAL), 235-255 (VMVS…SNDF), 285-305 (LGVL…AGVL), and 315-335 (VAAV…SLVL). Positions 75 to 178 (VAVAGWPITC…ITGAMAIIAL (104 aa)) constitute an EamA domain.

Belongs to the purine permeases (TC 2.A.7.14) family.

The protein resides in the membrane. The polypeptide is Probable purine permease 5 (PUP5) (Arabidopsis thaliana (Mouse-ear cress)).